The sequence spans 154 residues: MHCPFCGANDTKVIDSRLVAEGEQVRRRRECLACGERFTTFETAELVLPRLIKQDGSRQPFDEEKLRAGMQRALEKRPVSVERLEAALAHIKHKLRATGEREVKSLVVGELVMGELQKLDEVAYIRFASVYRRFQDLNEFREEIDRLAREPGKE.

Residues 3–34 (CPFCGANDTKVIDSRLVAEGEQVRRRRECLAC) fold into a zinc finger. Residues 49–139 (PRLIKQDGSR…VYRRFQDLNE (91 aa)) enclose the ATP-cone domain.

It belongs to the NrdR family. The cofactor is Zn(2+).

Its function is as follows. Negatively regulates transcription of bacterial ribonucleotide reductase nrd genes and operons by binding to NrdR-boxes. The sequence is that of Transcriptional repressor NrdR from Pseudomonas syringae pv. tomato (strain ATCC BAA-871 / DC3000).